The sequence spans 218 residues: Large ribosomal subunit protein uL3c (218 aa).

Residues 127-161 (GFSRGPMTHGSKNHREPGSTGAGTTPGRIYPGKRM) form a disordered region.

The protein belongs to the universal ribosomal protein uL3 family. Part of the 50S ribosomal subunit.

The protein resides in the plastid. It localises to the organellar chromatophore. Its function is as follows. One of the primary rRNA binding proteins, it binds directly near the 3'-end of the 23S rRNA, where it nucleates assembly of the 50S subunit. The protein is Large ribosomal subunit protein uL3c (rpl3) of Paulinella chromatophora.